A 341-amino-acid polypeptide reads, in one-letter code: MDLDRLDLNPRIVAAVKKAKLRSVKEVLHLSGPDLQRRTHLSSPDVQLLLRASASLLRGHGVCTALHLLRQEGPFPEQHQRLSLGCPVLDALLRGGLPLDGITELAGRSSAGKTQLALQLCLAVQLPPRHGGLGAGAVYVCTEDAFPSRRLQQLIAQQQRLRADVPGHVISKIRFGHQIFIEHAADVDTLLQCVREKVPVLLARGMARLVVIDSVAAPFRCEFDGAALALRAQRLLALGAELRRLSCAFRSPVLCVNQVTEAVEEQDLVAGPPGMSPALGITWANQLLVRLLADRQRPEEAPLTPPGRTLRVVFAPHLPASSCSYTIAAEGVRGMPGTACS.

At M1 the chain carries N-acetylmethionine. Residue 107-114 (GRSSAGKT) participates in ATP binding.

It belongs to the RecA family. RAD51 subfamily. As to quaternary structure, interacts with RAD51C and RAD51. Part of the CX3 complex consisting of RAD51C and XRCC3; the complex has a ring-like structure arranged into a flat disc around a central channel; CX3 can interact with RAD51 in vitro. Forms a complex with FANCD2, BRCA2 and phosphorylated FANCG. Interacts with SWSAP1 and ZSWIM7; involved in homologous recombination repair. Interacts directly with PALB2 which may serve as a scaffold for a HR complex containing PALB2, BRCA2, RAD51C, RAD51 and XRCC3.

It localises to the nucleus. The protein resides in the cytoplasm. The protein localises to the perinuclear region. Its subcellular location is the mitochondrion matrix. Functionally, involved in the homologous recombination repair (HRR) pathway of double-stranded DNA, thought to repair chromosomal fragmentation, translocations and deletions. Part of the RAD21 paralog protein complex CX3 which acts in the BRCA1-BRCA2-dependent HR pathway. Upon DNA damage, CX3 acts downstream of RAD51 recruitment; the complex binds predominantly to the intersection of the four duplex arms of the Holliday junction (HJ) and to junctions of replication forks. Involved in HJ resolution and thus in processing HR intermediates late in the DNA repair process; the function may be linked to the CX3 complex and seems to involve GEN1 during mitotic cell cycle progression. Part of a PALB2-scaffolded HR complex containing BRCA2 and RAD51C and which is thought to play a role in DNA repair by HR. Plays a role in regulating mitochondrial DNA copy number under conditions of oxidative stress in the presence of RAD51 and RAD51C. This is DNA repair protein XRCC3 (XRCC3) from Bos taurus (Bovine).